Here is a 745-residue protein sequence, read N- to C-terminus: Inhibitor of nuclear factor kappa-B kinase subunit alpha (745 aa).

Residues 15 to 300 form the Protein kinase domain; that stretch reads WEMRERLGTG…IDLTLKQPRC (286 aa). ATP-binding positions include 21 to 29 and Lys-44; that span reads LGTGGFGNV. Thr-23 bears the Phosphothreonine; by PKB/AKT1 and SGK1 mark. The Proton acceptor role is filled by Asp-144. Ser-176 carries the post-translational modification Phosphoserine; by MAP3K14. A Phosphoserine; by SGK1 modification is found at Ser-180. The interval 455–476 is leucine-zipper; sequence LLRYNANLTKMKNTLISASQQL. The tract at residues 738 to 743 is NEMO-binding; sequence LDWSWL.

It belongs to the protein kinase superfamily. Ser/Thr protein kinase family. I-kappa-B kinase subfamily. In terms of assembly, component of the I-kappa-B-kinase (IKK) core complex consisting of CHUK, IKBKB and IKBKG; probably four alpha/CHUK-beta/IKBKB dimers are associated with four gamma/IKBKG subunits. The IKK core complex seems to associate with regulatory or adapter proteins to form a IKK-signalosome holo-complex. The IKK complex associates with TERF2IP/RAP1, leading to promote IKK-mediated phosphorylation of RELA/p65. Part of a complex composed of NCOA2, NCOA3, CHUK/IKKA, IKBKB, IKBKG and CREBBP. Part of a 70-90 kDa complex at least consisting of CHUK/IKKA, IKBKB, NFKBIA, RELA, ELP1 and MAP3K14. Directly interacts with TRPC4AP. May interact with TRAF2. Interacts with NALP2. May interact with MAVS/IPS1. Interacts with ARRB1 and ARRB2. Interacts with NLRC5; prevents CHUK phosphorylation and kinase activity. Interacts with PIAS1; this interaction induces PIAS1 phosphorylation. Interacts with ZNF268 isoform 2; the interaction is further increased in a TNF-alpha-dependent manner. Interacts with LRRC14. Interacts with SASH1. Directly interacts with DDX3X after the physiological activation of the TLR7 and TLR8 pathways; this interaction enhances CHUK autophosphorylation. In terms of processing, ubiquitinated by TRIM56 via 'Lys-63'-linked ubiquitination, promoting activation of CHUK/IKKA. Phosphorylated by MAP3K14/NIK, AKT and to a lesser extent by MEKK1, and dephosphorylated by PP2A. Autophosphorylated. Ubiquitous only for isoform 1, isoforms 2 and 3 are expressed predominantly in brain and T-lymphocytes.

Its subcellular location is the cytoplasm. The protein localises to the nucleus. It catalyses the reaction L-seryl-[I-kappa-B protein] + ATP = O-phospho-L-seryl-[I-kappa-B protein] + ADP + H(+). Activated when phosphorylated and inactivated when dephosphorylated. Its function is as follows. Serine kinase that plays an essential role in the NF-kappa-B signaling pathway which is activated by multiple stimuli such as inflammatory cytokines, bacterial or viral products, DNA damages or other cellular stresses. Acts as a part of the canonical IKK complex in the conventional pathway of NF-kappa-B activation and phosphorylates inhibitors of NF-kappa-B on serine residues. These modifications allow polyubiquitination of the inhibitors and subsequent degradation by the proteasome. In turn, free NF-kappa-B is translocated into the nucleus and activates the transcription of hundreds of genes involved in immune response, growth control, or protection against apoptosis. Negatively regulates the pathway by phosphorylating the scaffold protein TAXBP1 and thus promoting the assembly of the A20/TNFAIP3 ubiquitin-editing complex (composed of A20/TNFAIP3, TAX1BP1, and the E3 ligases ITCH and RNF11). Therefore, CHUK plays a key role in the negative feedback of NF-kappa-B canonical signaling to limit inflammatory gene activation. As part of the non-canonical pathway of NF-kappa-B activation, the MAP3K14-activated CHUK/IKKA homodimer phosphorylates NFKB2/p100 associated with RelB, inducing its proteolytic processing to NFKB2/p52 and the formation of NF-kappa-B RelB-p52 complexes. In turn, these complexes regulate genes encoding molecules involved in B-cell survival and lymphoid organogenesis. Also participates in the negative feedback of the non-canonical NF-kappa-B signaling pathway by phosphorylating and destabilizing MAP3K14/NIK. Within the nucleus, phosphorylates CREBBP and consequently increases both its transcriptional and histone acetyltransferase activities. Modulates chromatin accessibility at NF-kappa-B-responsive promoters by phosphorylating histones H3 at 'Ser-10' that are subsequently acetylated at 'Lys-14' by CREBBP. Additionally, phosphorylates the CREBBP-interacting protein NCOA3. Also phosphorylates FOXO3 and may regulate this pro-apoptotic transcription factor. Phosphorylates RIPK1 at 'Ser-25' which represses its kinase activity and consequently prevents TNF-mediated RIPK1-dependent cell death. Phosphorylates AMBRA1 following mitophagy induction, promoting AMBRA1 interaction with ATG8 family proteins and its mitophagic activity. The polypeptide is Inhibitor of nuclear factor kappa-B kinase subunit alpha (Chuk) (Mus musculus (Mouse)).